Here is a 170-residue protein sequence, read N- to C-terminus: Cyclic pyranopterin monophosphate synthase 1 (170 aa).

Substrate contacts are provided by residues 79 to 81 and 116 to 117; these read LCH and ME. The active site involves D131.

The protein belongs to the MoaC family. In terms of assembly, homohexamer; trimer of dimers.

It carries out the reaction (8S)-3',8-cyclo-7,8-dihydroguanosine 5'-triphosphate = cyclic pyranopterin phosphate + diphosphate. The protein operates within cofactor biosynthesis; molybdopterin biosynthesis. In terms of biological role, catalyzes the conversion of (8S)-3',8-cyclo-7,8-dihydroguanosine 5'-triphosphate to cyclic pyranopterin monophosphate (cPMP). This Mycobacterium bovis (strain ATCC BAA-935 / AF2122/97) protein is Cyclic pyranopterin monophosphate synthase 1 (moaC1).